Consider the following 246-residue polypeptide: Protein lin-37 homolog (246 aa).

M1 carries the post-translational modification N-acetylmethionine. Residues K5 and K7 each participate in a glycyl lysine isopeptide (Lys-Gly) (interchain with G-Cter in SUMO2) cross-link. Over residues 39 to 55 (RLDEEAGKTPLDTHNKD) the composition is skewed to basic and acidic residues. Disordered stretches follow at residues 39-90 (RLDE…GGPQ) and 129-208 (VRER…TLIY). 2 positions are modified to phosphoserine: S135 and S138. T167 is subject to Phosphothreonine. 2 positions are modified to phosphoserine: S182 and S202.

As to quaternary structure, component of the DREAM complex (also named LINC complex) at least composed of E2F4, E2F5, LIN9, LIN37, LIN52, LIN54, MYBL1, MYBL2, RBL1, RBL2, RBBP4, TFDP1 and TFDP2. The complex exists in quiescent cells where it represses cell cycle-dependent genes. It dissociates in S phase when LIN9, LIN37, LIN52 and LIN54 form a subcomplex that binds to MYBL2.

The sequence is that of Protein lin-37 homolog (Lin37) from Mus musculus (Mouse).